Consider the following 61-residue polypeptide: Small ribosomal subunit protein uS14 (61 aa).

The Zn(2+) site is built by C24, C27, C40, and C43.

This sequence belongs to the universal ribosomal protein uS14 family. Zinc-binding uS14 subfamily. In terms of assembly, part of the 30S ribosomal subunit. Contacts proteins S3 and S10. Requires Zn(2+) as cofactor.

Its function is as follows. Binds 16S rRNA, required for the assembly of 30S particles and may also be responsible for determining the conformation of the 16S rRNA at the A site. The sequence is that of Small ribosomal subunit protein uS14 from Heliobacterium modesticaldum (strain ATCC 51547 / Ice1).